The primary structure comprises 482 residues: tRNA-2-methylthio-N(6)-dimethylallyladenosine synthase (482 aa).

The 118-residue stretch at 3–120 (KKLHIKTWGC…LPEMIKQVQG (118 aa)) folds into the MTTase N-terminal domain. [4Fe-4S] cluster contacts are provided by Cys12, Cys49, Cys83, Cys158, Cys162, and Cys165. A Radical SAM core domain is found at 144-376 (KADGPSAFVS…QNRITQMAQQ (233 aa)). The region spanning 379 to 442 (RQMFDTEQRI…PNSLRGDLIR (64 aa)) is the TRAM domain.

This sequence belongs to the methylthiotransferase family. MiaB subfamily. Monomer. [4Fe-4S] cluster is required as a cofactor.

The protein localises to the cytoplasm. The enzyme catalyses N(6)-dimethylallyladenosine(37) in tRNA + (sulfur carrier)-SH + AH2 + 2 S-adenosyl-L-methionine = 2-methylsulfanyl-N(6)-dimethylallyladenosine(37) in tRNA + (sulfur carrier)-H + 5'-deoxyadenosine + L-methionine + A + S-adenosyl-L-homocysteine + 2 H(+). Its function is as follows. Catalyzes the methylthiolation of N6-(dimethylallyl)adenosine (i(6)A), leading to the formation of 2-methylthio-N6-(dimethylallyl)adenosine (ms(2)i(6)A) at position 37 in tRNAs that read codons beginning with uridine. This chain is tRNA-2-methylthio-N(6)-dimethylallyladenosine synthase, found in Pseudoalteromonas translucida (strain TAC 125).